We begin with the raw amino-acid sequence, 396 residues long: Tryptophan synthase beta chain (396 aa).

Lys88 is modified (N6-(pyridoxal phosphate)lysine).

Belongs to the TrpB family. Tetramer of two alpha and two beta chains. The cofactor is pyridoxal 5'-phosphate.

It carries out the reaction (1S,2R)-1-C-(indol-3-yl)glycerol 3-phosphate + L-serine = D-glyceraldehyde 3-phosphate + L-tryptophan + H2O. It functions in the pathway amino-acid biosynthesis; L-tryptophan biosynthesis; L-tryptophan from chorismate: step 5/5. In terms of biological role, the beta subunit is responsible for the synthesis of L-tryptophan from indole and L-serine. The polypeptide is Tryptophan synthase beta chain (Leptospira biflexa serovar Patoc (strain Patoc 1 / Ames)).